A 1486-amino-acid chain; its full sequence is Homeobox protein cut-like 2 (1486 aa).

Positions 114 to 167 are disordered; the sequence is DRLQPPSFDPSGQPRRDLHTSWKRNPELLSPKEQREGTSPAGPTLTEGSRLPGI. The segment covering 127–149 has biased composition (basic and acidic residues); the sequence is PRRDLHTSWKRNPELLSPKEQRE. The residue at position 143 (Ser143) is a Phosphoserine. Residues 195-374 are a coiled coil; that stretch reads TLAARLGEAE…IKTELSILKA (180 aa). Disordered regions lie at residues 415 to 481, 517 to 549, 661 to 690, 716 to 758, 800 to 858, and 964 to 1032; these read LLAS…LSPF, PTAP…PGAE, EIES…STSE, VAPR…AQAP, YASV…EGAT, and GQAV…SGSQ. Residues 419-428 show a composition bias toward acidic residues; sequence PEEDPSEDDS. The segment covering 443–460 has biased composition (pro residues); the sequence is QQLPPPPGPEDPLSPSPG. The segment covering 461-470 has biased composition (low complexity); sequence QPLLGPSLGP. Pro residues predominate over residues 517–532; the sequence is PTAPATPAPGPEPLGG. The segment at residues 544-631 is a DNA-binding region (CUT 1); sequence AGPGAEEEQL…VLALRTIQVR (88 aa). Over residues 680–690 the composition is skewed to polar residues; the sequence is ANGTTPASTSE. The stretch at 690–717 forms a coiled coil; it reads EDAIKSILEQARREMQAQQQALLEMEVA. The span at 802 to 816 shows a compositional bias: low complexity; the sequence is SVSPSLSSSSSSGYS. A compositionally biased stretch (acidic residues) spans 834–844; the sequence is PEDEAAAGAED. A compositionally biased stretch (basic and acidic residues) spans 845–854; the sequence is EPPRTGELKA. Positions 887 to 974 form a DNA-binding region, CUT 2; it reads QYELYMYREV…QAVGQQPGAS (88 aa). A compositionally biased stretch (polar residues) spans 967 to 976; the sequence is VGQQPGASQA. The span at 1017-1031 shows a compositional bias: low complexity; sequence GRSSSSLSGKMYSGS. Positions 1038–1125 form a DNA-binding region, CUT 3; that stretch reads QEIVAMSPEL…VEKLRDMKKL (88 aa). The homeobox DNA-binding region spans 1168–1227; the sequence is IKKPRVVLAPEEKEALRKAYQLEPYPSQQTIELLSFQLNLKTNTVINWFHNYRSRMRREM. The segment at 1231–1453 is disordered; it reads GTQDEPDLDP…ALHPSAKVNP (223 aa). Residues 1266–1276 show a composition bias toward basic and acidic residues; that stretch reads EDQKPTVKELE. Over residues 1283 to 1293 the composition is skewed to polar residues; that stretch reads ENSTPLTTQDK. The span at 1320 to 1334 shows a compositional bias: basic and acidic residues; the sequence is ELDKGQGPPKEEHPD. Polar residues predominate over residues 1381–1401; it reads KSASESSRCSLEVSLNSPSAA. The segment covering 1402–1420 has biased composition (low complexity); the sequence is SSPGLMMSVSPVPSSSAPI. The span at 1421 to 1431 shows a compositional bias: pro residues; it reads SPSPPGAPPAK.

Belongs to the CUT homeobox family.

The protein resides in the nucleus. Transcription factor involved in the control of neuronal proliferation and differentiation in the brain. Regulates dendrite development and branching, dendritic spine formation, and synaptogenesis in cortical layers II-III. Binds to DNA in a sequence-specific manner. The polypeptide is Homeobox protein cut-like 2 (CUX2) (Homo sapiens (Human)).